The following is a 173-amino-acid chain: Peptide deformylase (173 aa).

Positions 98 and 140 each coordinate Fe cation. Glutamate 141 is a catalytic residue. Fe cation is bound at residue histidine 144.

This sequence belongs to the polypeptide deformylase family. It depends on Fe(2+) as a cofactor.

It carries out the reaction N-terminal N-formyl-L-methionyl-[peptide] + H2O = N-terminal L-methionyl-[peptide] + formate. Functionally, removes the formyl group from the N-terminal Met of newly synthesized proteins. Requires at least a dipeptide for an efficient rate of reaction. N-terminal L-methionine is a prerequisite for activity but the enzyme has broad specificity at other positions. This Caulobacter vibrioides (strain ATCC 19089 / CIP 103742 / CB 15) (Caulobacter crescentus) protein is Peptide deformylase.